The sequence spans 241 residues: Uridylate kinase (241 aa).

Residue 12-15 participates in ATP binding; that stretch reads KLSG. Gly-54 is a UMP binding site. 2 residues coordinate ATP: Gly-55 and Arg-59. UMP contacts are provided by residues Asp-74 and 135-142; that span reads TGNPFFTT. Residues Thr-162, Tyr-168, and Asp-171 each coordinate ATP.

The protein belongs to the UMP kinase family. In terms of assembly, homohexamer.

The protein localises to the cytoplasm. The enzyme catalyses UMP + ATP = UDP + ADP. It participates in pyrimidine metabolism; CTP biosynthesis via de novo pathway; UDP from UMP (UMPK route): step 1/1. Its activity is regulated as follows. Inhibited by UTP. Catalyzes the reversible phosphorylation of UMP to UDP. The sequence is that of Uridylate kinase from Magnetococcus marinus (strain ATCC BAA-1437 / JCM 17883 / MC-1).